A 452-amino-acid polypeptide reads, in one-letter code: Bifunctional protein GlmU (452 aa).

Residues 1–232 (MTGRSCLTIV…EDEVRGINTK (232 aa)) form a pyrophosphorylase region. UDP-N-acetyl-alpha-D-glucosamine contacts are provided by residues 11–14 (LAAG), lysine 25, glutamine 78, and 83–84 (GT). Residue aspartate 108 coordinates Mg(2+). UDP-N-acetyl-alpha-D-glucosamine-binding residues include glycine 144, glutamate 158, asparagine 173, and asparagine 230. Asparagine 230 contacts Mg(2+). The tract at residues 233–253 (AQLAEAEQVMQARLRKEALDA) is linker. The tract at residues 254–452 (GVTMVAPDTV…KLLAKKPKTG (199 aa)) is N-acetyltransferase. The UDP-N-acetyl-alpha-D-glucosamine site is built by arginine 319 and lysine 337. The Proton acceptor role is filled by histidine 349. Residues tyrosine 352 and asparagine 363 each contribute to the UDP-N-acetyl-alpha-D-glucosamine site. Acetyl-CoA is bound by residues alanine 366, 372–373 (NY), serine 391, serine 409, and arginine 426.

The protein in the N-terminal section; belongs to the N-acetylglucosamine-1-phosphate uridyltransferase family. It in the C-terminal section; belongs to the transferase hexapeptide repeat family. In terms of assembly, homotrimer. The cofactor is Mg(2+).

The protein localises to the cytoplasm. The enzyme catalyses alpha-D-glucosamine 1-phosphate + acetyl-CoA = N-acetyl-alpha-D-glucosamine 1-phosphate + CoA + H(+). The catalysed reaction is N-acetyl-alpha-D-glucosamine 1-phosphate + UTP + H(+) = UDP-N-acetyl-alpha-D-glucosamine + diphosphate. It functions in the pathway nucleotide-sugar biosynthesis; UDP-N-acetyl-alpha-D-glucosamine biosynthesis; N-acetyl-alpha-D-glucosamine 1-phosphate from alpha-D-glucosamine 6-phosphate (route II): step 2/2. It participates in nucleotide-sugar biosynthesis; UDP-N-acetyl-alpha-D-glucosamine biosynthesis; UDP-N-acetyl-alpha-D-glucosamine from N-acetyl-alpha-D-glucosamine 1-phosphate: step 1/1. Its pathway is bacterial outer membrane biogenesis; LPS lipid A biosynthesis. Catalyzes the last two sequential reactions in the de novo biosynthetic pathway for UDP-N-acetylglucosamine (UDP-GlcNAc). The C-terminal domain catalyzes the transfer of acetyl group from acetyl coenzyme A to glucosamine-1-phosphate (GlcN-1-P) to produce N-acetylglucosamine-1-phosphate (GlcNAc-1-P), which is converted into UDP-GlcNAc by the transfer of uridine 5-monophosphate (from uridine 5-triphosphate), a reaction catalyzed by the N-terminal domain. The protein is Bifunctional protein GlmU of Nitrobacter hamburgensis (strain DSM 10229 / NCIMB 13809 / X14).